The primary structure comprises 84 residues: RNA-binding protein Hfq (84 aa).

In terms of domain architecture, Sm spans 11-71 (DVFLNFIRKN…ISTVMPSTPI (61 aa)).

It belongs to the Hfq family. As to quaternary structure, homohexamer.

RNA chaperone that binds small regulatory RNA (sRNAs) and mRNAs to facilitate mRNA translational regulation in response to envelope stress, environmental stress and changes in metabolite concentrations. Also binds with high specificity to tRNAs. The sequence is that of RNA-binding protein Hfq from Paramagnetospirillum magneticum (strain ATCC 700264 / AMB-1) (Magnetospirillum magneticum).